Here is a 119-residue protein sequence, read N- to C-terminus: Hisactophilin-3 (119 aa).

The N-myristoyl glycine moiety is linked to residue Gly-2. The segment at 8 to 110 (SHHGHFLSAE…SIYTTHHHHH (103 aa)) is contains several HHXH repeats. 2 tandem repeats follow at residues 34-47 (FHVENHGHHKVAIR) and 75-87 (FHLEHHGGKVSIK). The interval 34–87 (FHVENHGHHKVAIRTHANKYVSINDNNDVYISHHFHGEHSLFHLEHHGGKVSIK) is 2 X 13 AA approximate repeats.

The protein belongs to the hisactophilin family. Post-translationally, phosphorylated.

It is found in the cytoplasm. The protein resides in the cell membrane. Functionally, may act as an intracellular pH sensor that links chemotactic signals to responses in the microfilament system of the cells by nucleating actin polymerization or stabilizing the filaments. This chain is Hisactophilin-3 (hatC), found in Dictyostelium discoideum (Social amoeba).